The chain runs to 177 residues: Large ribosomal subunit protein uL6 (177 aa).

Belongs to the universal ribosomal protein uL6 family. Part of the 50S ribosomal subunit.

Its function is as follows. This protein binds to the 23S rRNA, and is important in its secondary structure. It is located near the subunit interface in the base of the L7/L12 stalk, and near the tRNA binding site of the peptidyltransferase center. The polypeptide is Large ribosomal subunit protein uL6 (Neisseria gonorrhoeae (strain ATCC 700825 / FA 1090)).